The chain runs to 2537 residues: Histone-lysine N-methyltransferase SETD2 (2537 aa).

A compositionally biased stretch (pro residues) spans 1 to 12 (MKPLPSQQPPPK). 5 disordered regions span residues 1-31 (MKPL…ENEA), 91-142 (TALS…ELGR), 156-483 (PQLA…RDLR), 510-554 (YTSK…STSR), and 607-629 (SERE…TFKK). Residues 18–31 (DPEHPTPEEEENEA) show a composition bias toward basic and acidic residues. Residues 91-103 (TALSNEKQSDSPN) show a composition bias toward polar residues. A Phosphoserine modification is found at Ser132. The segment covering 156 to 166 (PQLAASTTAAS) has biased composition (low complexity). A compositionally biased stretch (pro residues) spans 187–205 (PSSPPPPPPPPQASSPSPP). Ser242 carries the phosphoserine modification. The span at 264 to 291 (LEEHTVQTLKEQADHLLQKEDSHIGKEE) shows a compositional bias: basic and acidic residues. Phosphoserine is present on residues Ser322, Ser324, and Ser345. Composition is skewed to basic and acidic residues over residues 336–401 (RSHD…ERDR), 422–433 (RSERSHYYDSER), 440–468 (PYRE…EYKK), and 510–528 (YTSK…ETIK). Lys360 participates in a covalent cross-link: Glycyl lysine isopeptide (Lys-Gly) (interchain with G-Cter in SUMO2). Ser423 is subject to Phosphoserine. Phosphoserine is present on residues Ser532, Ser614, and Ser624. Polar residues predominate over residues 613 to 625 (GSPTPSNQLNDSP). Position 626 is a phosphothreonine (Thr626). A Phosphoserine modification is found at Ser633. Lys637 is covalently cross-linked (Glycyl lysine isopeptide (Lys-Gly) (interchain with G-Cter in SUMO2)). Phosphoserine occurs at positions 697, 707, 743, and 753. The disordered stretch occupies residues 729 to 749 (RDSDDTCRQHNTSKSPFREME). Lys775 is covalently cross-linked (Glycyl lysine isopeptide (Lys-Gly) (interchain with G-Cter in SUMO2)). Disordered regions lie at residues 829 to 894 (CDNR…PTLD), 941 to 974 (QEAQ…HISD), 1015 to 1078 (EDYS…HYSD), and 1135 to 1185 (AHAQ…EDLP). A compositionally biased stretch (basic and acidic residues) spans 830–847 (DNREPTDRHSENTCDEYK). Over residues 849–858 (SIGSTSSASH) the composition is skewed to polar residues. Residues 867–883 (PIGSSGISSLQSPPSGI) show a composition bias toward low complexity. Residues 951–974 (LHERRGRPEIPLDEEQRGHTHISD) are compositionally biased toward basic and acidic residues. Residues 1026 to 1037 (DESDSEDTESDD) are compositionally biased toward acidic residues. A Phosphoserine modification is found at Ser1077. The segment covering 1150–1165 (SRSDHLGHLNPEDTLR) has biased composition (basic and acidic residues). Ser1201 carries the post-translational modification Phosphoserine. Disordered regions lie at residues 1232–1254 (GWDF…SYGT), 1280–1346 (WDPR…APEI), and 1366–1396 (NFEK…GELQ). Polar residues-rich tracts occupy residues 1235 to 1254 (FSQQ…SYGT) and 1319 to 1329 (RSGSHFSSPSN). A compositionally biased stretch (basic and acidic residues) spans 1366–1377 (NFEKNDIKERGP). Phosphoserine occurs at positions 1387, 1389, and 1391. The tract at residues 1392–1688 (DGELQARKKV…KKERSRKKDS (297 aa)) is interaction with TUBA1A. The region spanning 1468-1522 (IKRMQCECTPLSKDERAQGEVACGEDCLNRLLMIECSSRCPNGDYCSNRRFQRKQ) is the AWS domain. 7 residues coordinate Zn(2+): Cys1473, Cys1475, Cys1490, Cys1494, Cys1503, Cys1507, and Cys1513. The SET domain maps to 1524 to 1641 (ADVEVILTEK…SGSELTFDYQ (118 aa)). S-adenosyl-L-methionine-binding positions include 1534 to 1536 (KGW), 1577 to 1579 (HYY), and 1602 to 1603 (NH). Cys1605 is a binding site for Zn(2+). Residues 1648-1664 (EAQKCFCGSANCRGYLG) enclose the Post-SET domain. Gln1650 provides a ligand contact to S-adenosyl-L-methionine. Cys1652 is a binding site for Zn(2+). Phe1653 contacts S-adenosyl-L-methionine. Positions 1654 and 1659 each coordinate Zn(2+). Residues Ser1670, Ser1818, and Ser1819 each carry the phosphoserine modification. The interval 1806–1848 (TAVPQLSEGDGYSSENTSRAHTPLNTPDPSAKPSTEMDTDTPK) is disordered. The segment covering 1818–1833 (SSENTSRAHTPLNTPD) has biased composition (polar residues). Phosphothreonine is present on residues Thr1827 and Thr1846. Residues Ser1862 and Ser1926 each carry the phosphoserine modification. Disordered stretches follow at residues 1914–1981 (SEAT…DISD) and 1993–2110 (LKEV…AQKQ). Over residues 1934 to 1946 (TEPKDSNGTKLEE) the composition is skewed to basic and acidic residues. Residues 1947-1964 (TIAEETPSQDEEEGVSDV) show a composition bias toward acidic residues. Residues Ser1954, Ser1962, and Ser1969 each carry the phosphoserine modification. Basic and acidic residues-rich tracts occupy residues 1965–1978 (ESER…KTVD), 1993–2020 (LKEV…DAAA), and 2032–2045 (RSRE…SQNK). 2 positions are modified to phosphoserine: Ser2053 and Ser2055. Composition is skewed to basic and acidic residues over residues 2063–2073 (RGTKRPDDRYD) and 2084–2108 (KDRN…REAQ). Residues 2090–2119 (STEERRKLFEQEVAQREAQKQQQQMQNLGM) are a coiled coil. The interval 2110–2339 (QQQQMQNLGM…APGQPQSLQP (230 aa)) is low charge region. A WW domain is found at 2362 to 2395 (IVLPPNWKTARDPEGKIYYYHVITRQTQWDPPTW). The interval 2412-2438 (LGTPTYDENPMKTSKKPKTAEADTSSE) is disordered. Residues 2430 to 2537 (TAEADTSSEL…YKPKEDTELE (108 aa)) form an interaction with POLR2A region.

It belongs to the class V-like SAM-binding methyltransferase superfamily. Histone-lysine methyltransferase family. SET2 subfamily. As to quaternary structure, specifically interacts with hyperphosphorylated C-terminal domain (CTD) of RNA polymerase II large subunit (POLR2A): binds to CTD heptad repeats doubly phosphorylated on 'Ser-2' and 'Ser-5' of each heptad. Interacts with HTT. Interacts with IWS1. Interacts with p53/TP53; leading to regulate p53/TP53 target genes. Component of a complex with HNRNPL. Interacts with TUBA1A; the interaction is independent on alpha-tubulin acetylation on 'Lys-40'. Post-translationally, may be automethylated.

It localises to the nucleus. The protein resides in the chromosome. The enzyme catalyses L-lysyl(36)-[histone H3] + 3 S-adenosyl-L-methionine = N(6),N(6),N(6)-trimethyl-L-lysyl(36)-[histone H3] + 3 S-adenosyl-L-homocysteine + 3 H(+). It carries out the reaction L-lysyl-[protein] + S-adenosyl-L-methionine = N(6)-methyl-L-lysyl-[protein] + S-adenosyl-L-homocysteine + H(+). The catalysed reaction is L-lysyl-[protein] + 3 S-adenosyl-L-methionine = N(6),N(6),N(6)-trimethyl-L-lysyl-[protein] + 3 S-adenosyl-L-homocysteine + 3 H(+). Its activity is regulated as follows. Specifically inhibited by sinefungin derivatives. Functionally, histone methyltransferase that specifically trimethylates 'Lys-36' of histone H3 (H3K36me3) using dimethylated 'Lys-36' (H3K36me2) as substrate. It is capable of trimethylating unmethylated H3K36 (H3K36me0) in vitro. Represents the main enzyme generating H3K36me3, a specific tag for epigenetic transcriptional activation. Plays a role in chromatin structure modulation during elongation by coordinating recruitment of the FACT complex and by interacting with hyperphosphorylated POLR2A. Acts as a key regulator of DNA mismatch repair in G1 and early S phase by generating H3K36me3, a mark required to recruit MSH6 subunit of the MutS alpha complex: early recruitment of the MutS alpha complex to chromatin to be replicated allows a quick identification of mismatch DNA to initiate the mismatch repair reaction. Required for DNA double-strand break repair in response to DNA damage: acts by mediating formation of H3K36me3, promoting recruitment of RAD51 and DNA repair via homologous recombination (HR). Acts as a tumor suppressor. H3K36me3 also plays an essential role in the maintenance of a heterochromatic state, by recruiting DNA methyltransferase DNMT3A. H3K36me3 is also enhanced in intron-containing genes, suggesting that SETD2 recruitment is enhanced by splicing and that splicing is coupled to recruitment of elongating RNA polymerase. Required during angiogenesis. Required for endoderm development by promoting embryonic stem cell differentiation toward endoderm: acts by mediating formation of H3K36me3 in distal promoter regions of FGFR3, leading to regulate transcription initiation of FGFR3. In addition to histones, also mediates methylation of other proteins, such as tubulins and STAT1. Trimethylates 'Lys-40' of alpha-tubulins such as TUBA1B (alpha-TubK40me3); alpha-TubK40me3 is required for normal mitosis and cytokinesis and may be a specific tag in cytoskeletal remodeling. Involved in interferon-alpha-induced antiviral defense by mediating both monomethylation of STAT1 at 'Lys-525' and catalyzing H3K36me3 on promoters of some interferon-stimulated genes (ISGs) to activate gene transcription. This chain is Histone-lysine N-methyltransferase SETD2, found in Mus musculus (Mouse).